Reading from the N-terminus, the 420-residue chain is Corticotropin-releasing factor receptor 1 (420 aa).

The first 28 residues, 1 to 28 (MVPGPRPALLLLLFLLQAFLLWDSPVAA), serve as a signal peptide directing secretion. The Extracellular portion of the chain corresponds to 29–116 (SIQEQYCESL…CQEILSEEKR (88 aa)). Disulfide bonds link C35–C59, C49–C92, and C73–C107. 5 N-linked (GlcNAc...) asparagine glycosylation sites follow: N43, N50, N83, N95, and N103. The helical transmembrane segment at 117 to 147 (SKLHYHIAVIINYLGHCVSLGTLLVAFVLFM) threads the bilayer. At 148-154 (RLRSIRC) the chain is on the cytoplasmic side. A helical membrane pass occupies residues 155-179 (LRNIIHWNLITAFILRNATWFVVQL). Topologically, residues 180-194 (TMNPEVHESNVVWCR) are extracellular. A disulfide bond links C193 and C263. Residues 195-223 (LVTAAYNYFHVTNFFWMFGEGCYLHTAIV) traverse the membrane as a helical segment. Over 224-230 (LTYSTDK) the chain is Cytoplasmic. Residues 231-258 (LRKWMFICIGWCIPFPIIVAWAIGKLYY) form a helical membrane-spanning segment. The Extracellular segment spans residues 259–274 (DNEKCWFGKRAGVYTD). A helical membrane pass occupies residues 275–300 (YIYQGPMILVLLINFIFLFNIVRILM). The Cytoplasmic segment spans residues 301–311 (TKLRASTTSET). Residues 312 to 336 (IQYRKAVKATLVLLSLLGITYMLFF) form a helical membrane-spanning segment. Residues 337–343 (VNPGEDE) are Extracellular-facing. Residues 344-373 (ISRIVFIYFNSFLESFQGFFVSVFYCFLNS) form a helical membrane-spanning segment. The Cytoplasmic portion of the chain corresponds to 374-420 (EVRSAVRKRWHRWQDKHSIRARVARAMSIPTSPTRVSFHSIKQSSAV).

The protein belongs to the G-protein coupled receptor 2 family. In terms of assembly, interacts (via N-terminal extracellular domain) with CRF and UCN.

The protein resides in the cell membrane. In terms of biological role, G-protein coupled receptor for CRH (corticotropin-releasing factor) and UCN (urocortin). Has high affinity for CRH and UCN. Ligand binding causes a conformation change that triggers signaling via guanine nucleotide-binding proteins (G proteins) and down-stream effectors, such as adenylate cyclase. Promotes the activation of adenylate cyclase, leading to increased intracellular cAMP levels. The polypeptide is Corticotropin-releasing factor receptor 1 (CRHR1) (Gallus gallus (Chicken)).